The primary structure comprises 215 residues: MFTGIIEETGTIESMKKAGHAMALTIKCSKILEDVHLGDSIAVNGICLTVTDFTKNQFTVDVMPETVKATSLNDLTKGSKVNLERAMAANGRFGGHFVSGHVDGTAEITRIEEKSNAVYYDLKMDPSLTKTLVLKGSITVDGVSLTIFGLTEDTVTISLIPHTISETIFSEKTIGSKVNIECDMIGKYMYRFLHKANENKTQQTITKAFLSENGF.

Lumazine-binding repeat units follow at residues 1 to 96 (MFTG…FGGH) and 97 to 193 (FVSG…YRFL). Residues 4–6 (GII), 47–49 (CLT), 61–66 (DVMPET), 100–102 (GHV), K135, 144–146 (SLT), and 158–163 (SLIPHT) contribute to the 2,4-dihydroxypteridine site.

Homotrimer. Can interact with 6,7-dimethyl-8-ribityllumazine synthase, forming a lumazine synthase/riboflavin synthase complex, also designated as 'heavy riboflavin synthase complex', which consists of a trimer of riboflavin synthase enclosed within an icosahedral structure composed of 60 subunits of 6,7-dimethyl-8-ribityllumazine synthase.

The catalysed reaction is 2 6,7-dimethyl-8-(1-D-ribityl)lumazine + H(+) = 5-amino-6-(D-ribitylamino)uracil + riboflavin. It functions in the pathway cofactor biosynthesis; riboflavin biosynthesis; riboflavin from 2-hydroxy-3-oxobutyl phosphate and 5-amino-6-(D-ribitylamino)uracil: step 2/2. Is activated by sulfite ions. Its function is as follows. Catalyzes the dismutation of two molecules of 6,7-dimethyl-8-ribityllumazine, resulting in the formation of riboflavin and 5-amino-6-(D-ribitylamino)uracil. The polypeptide is Riboflavin synthase (ribE) (Bacillus subtilis (strain 168)).